Consider the following 171-residue polypeptide: Glutathione peroxidase-like peroxiredoxin GPX3 (171 aa).

The Cysteine sulfenic acid (-SOH) intermediate role is filled by cysteine 43. A disulfide bridge links cysteine 43 with cysteine 89.

Belongs to the glutathione peroxidase family. In terms of assembly, interacts with CAP1 and probably YBP1.

The catalysed reaction is a hydroperoxide + [thioredoxin]-dithiol = an alcohol + [thioredoxin]-disulfide + H2O. Its function is as follows. Involved in oxidative stress response and redox homeostasis. Functions as a sensor and transducer of hydroperoxide stress. In response to hydroperoxide stress it oxidizes (activates) the transcription activator CAP1, which is involved in transcription activation of genes of the oxidative stress response pathway. May also play a direct role in hydroperoxide scavenging. The enzyme is not required for the glutaredoxin-mediated antioxidant function. In the presence of peroxides, GPX3 is directly oxidized at Cys-43 to form a cysteine sulfenic acid (-SOH). Cys-43-SOH then forms either an intramolecular disulfide bond (Cys-43 with Cys-89) or a transient, intermolecular disulfide bond with 'Cys-446' of CAP1, which is further resolved into a CAP1 intramolecular disulfide bond ('Cys-303' with 'Cys-598'), which causes its nuclear accumulation and activation, and a reduced Cys-43 in GPX3. Required for C.albicans-mediated macrophage killing. The chain is Glutathione peroxidase-like peroxiredoxin GPX3 from Candida albicans (strain SC5314 / ATCC MYA-2876) (Yeast).